Reading from the N-terminus, the 92-residue chain is DNA-directed RNA polymerase subunit omega (92 aa).

The protein belongs to the RNA polymerase subunit omega family. The RNAP catalytic core consists of 2 alpha, 1 beta, 1 beta' and 1 omega subunit. When a sigma factor is associated with the core the holoenzyme is formed, which can initiate transcription.

It catalyses the reaction RNA(n) + a ribonucleoside 5'-triphosphate = RNA(n+1) + diphosphate. Functionally, promotes RNA polymerase assembly. Latches the N- and C-terminal regions of the beta' subunit thereby facilitating its interaction with the beta and alpha subunits. The polypeptide is DNA-directed RNA polymerase subunit omega (Shewanella baltica (strain OS223)).